A 408-amino-acid chain; its full sequence is Succinylornithine transaminase (408 aa).

The residue at position 252 (K252) is an N6-(pyridoxal phosphate)lysine.

Belongs to the class-III pyridoxal-phosphate-dependent aminotransferase family. AstC subfamily. It depends on pyridoxal 5'-phosphate as a cofactor.

The catalysed reaction is N(2)-succinyl-L-ornithine + 2-oxoglutarate = N-succinyl-L-glutamate 5-semialdehyde + L-glutamate. It participates in amino-acid degradation; L-arginine degradation via AST pathway; L-glutamate and succinate from L-arginine: step 3/5. Functionally, catalyzes the transamination of N(2)-succinylornithine and alpha-ketoglutarate into N(2)-succinylglutamate semialdehyde and glutamate. Can also act as an acetylornithine aminotransferase. This is Succinylornithine transaminase from Salmonella choleraesuis (strain SC-B67).